A 293-amino-acid chain; its full sequence is TBC1 domain family member 7 (293 aa).

In terms of domain architecture, Rab-GAP TBC spans 50 to 231 (PLPSMYRALV…RVWDKVVSGS (182 aa)).

Component of the TSC-TBC complex (also named Rhebulator complex), composed of 2 molecules of TSC1, 2 molecules of TSC2 and 1 molecule of TBC1D7. Interacts with TSC1 (via C-terminal half of the coiled-coil domain). Highly expressed in heart, and slightly in kidney, liver and placenta.

The protein localises to the lysosome membrane. The protein resides in the cytoplasmic vesicle. It is found in the cytoplasm. Its subcellular location is the cytosol. Non-catalytic component of the TSC-TBC complex, a multiprotein complex that acts as a negative regulator of the canonical mTORC1 complex, an evolutionarily conserved central nutrient sensor that stimulates anabolic reactions and macromolecule biosynthesis to promote cellular biomass generation and growth. The TSC-TBC complex acts as a GTPase-activating protein (GAP) for the small GTPase RHEB, a direct activator of the protein kinase activity of mTORC1. In absence of nutrients, the TSC-TBC complex inhibits mTORC1, thereby preventing phosphorylation of ribosomal protein S6 kinase (RPS6KB1 and RPS6KB2) and EIF4EBP1 (4E-BP1) by the mTORC1 signaling. The TSC-TBC complex is inactivated in response to nutrients, relieving inhibition of mTORC1. This Homo sapiens (Human) protein is TBC1 domain family member 7.